A 377-amino-acid chain; its full sequence is Adaptive-response sensory kinase SasA (377 aa).

Positions 154-373 (MLVHDLRSPL…SFHFTLPVYR (220 aa)) constitute a Histidine kinase domain. Phosphohistidine; by autocatalysis is present on His157.

As to quaternary structure, homooligomerizes. Interacts with KaiC. Participates in the KaiABC clock complex, whose core is composed of a KaiC homohexamer, 6 KaiB and up to 6 KaiA dimers. SasA and KaiB(fs) compete to bind to KaiC.

The enzyme catalyses ATP + protein L-histidine = ADP + protein N-phospho-L-histidine.. Member of the two-component regulatory system SasA/RpaA involved in genome-wide circadian gene expression. One of several clock output pathways. Participates in the Kai clock protein complex, the main circadian regulator in cyanobacteria, via its interaction with KaiC. KaiC enhances the autophosphorylation activity of SasA, which then transfers its phosphate group to RpaA to activate it. In addition to its output function, recruits fold-shifted KaiB (KaiB(fs)) to KaiC to cooperatively form the KaiB(6):KaiC(6) complex (independent of SasA kinase activity). Required for robustness of the circadian rhythm of gene expression and is involved in clock output, also required for adaptation to light/dark cycles. This chain is Adaptive-response sensory kinase SasA, found in Synechococcus sp. (strain JA-2-3B'a(2-13)) (Cyanobacteria bacterium Yellowstone B-Prime).